The sequence spans 230 residues: Large ribosomal subunit protein uL1 (230 aa).

The protein belongs to the universal ribosomal protein uL1 family. Part of the 50S ribosomal subunit.

Functionally, binds directly to 23S rRNA. The L1 stalk is quite mobile in the ribosome, and is involved in E site tRNA release. Protein L1 is also a translational repressor protein, it controls the translation of the L11 operon by binding to its mRNA. In Onion yellows phytoplasma (strain OY-M), this protein is Large ribosomal subunit protein uL1.